A 463-amino-acid polypeptide reads, in one-letter code: ATP synthase subunit beta (463 aa).

152 to 159 lines the ATP pocket; that stretch reads GGAGVGKT.

The protein belongs to the ATPase alpha/beta chains family. As to quaternary structure, F-type ATPases have 2 components, CF(1) - the catalytic core - and CF(0) - the membrane proton channel. CF(1) has five subunits: alpha(3), beta(3), gamma(1), delta(1), epsilon(1). CF(0) has three main subunits: a(1), b(2) and c(9-12). The alpha and beta chains form an alternating ring which encloses part of the gamma chain. CF(1) is attached to CF(0) by a central stalk formed by the gamma and epsilon chains, while a peripheral stalk is formed by the delta and b chains.

It localises to the cell inner membrane. The enzyme catalyses ATP + H2O + 4 H(+)(in) = ADP + phosphate + 5 H(+)(out). Its function is as follows. Produces ATP from ADP in the presence of a proton gradient across the membrane. The catalytic sites are hosted primarily by the beta subunits. This is ATP synthase subunit beta from Shewanella baltica (strain OS223).